We begin with the raw amino-acid sequence, 295 residues long: 5,10-methylenetetrahydrofolate reductase (295 aa).

The Proton donor/acceptor role is filled by glutamate 28. Threonine 59 is a binding site for NADH. Residues histidine 89, arginine 119, glycine 120, aspartate 121, alanine 133, tyrosine 153, histidine 157, alanine 160, aspartate 166, asparagine 169, arginine 172, and lysine 173 each coordinate FAD. Aspartate 121 provides a ligand contact to (6S)-5-methyl-5,6,7,8-tetrahydrofolate. Glutamine 184 contacts NADH. (6S)-5-methyl-5,6,7,8-tetrahydrofolate contacts are provided by glutamine 184, glutamine 220, and lysine 280.

Belongs to the methylenetetrahydrofolate reductase family. It depends on FAD as a cofactor.

The enzyme catalyses (6S)-5-methyl-5,6,7,8-tetrahydrofolate + NAD(+) = (6R)-5,10-methylene-5,6,7,8-tetrahydrofolate + NADH + H(+). It functions in the pathway one-carbon metabolism; tetrahydrofolate interconversion. The protein operates within amino-acid biosynthesis; L-methionine biosynthesis via de novo pathway. Its function is as follows. Catalyzes the NADH-dependent reduction of 5,10-methylenetetrahydrofolate to 5-methyltetrahydrofolate. Is required to provide the methyl group necessary for methionine synthetase to convert homocysteine to methionine; the methyl group is given by 5-methyltetrahydrofolate. In Buchnera aphidicola subsp. Baizongia pistaciae (strain Bp), this protein is 5,10-methylenetetrahydrofolate reductase (metF).